The following is a 103-amino-acid chain: Co-chaperonin GroES (103 aa).

Belongs to the GroES chaperonin family. As to quaternary structure, heptamer of 7 subunits arranged in a ring. Interacts with the chaperonin GroEL.

The protein resides in the cytoplasm. In terms of biological role, together with the chaperonin GroEL, plays an essential role in assisting protein folding. The GroEL-GroES system forms a nano-cage that allows encapsulation of the non-native substrate proteins and provides a physical environment optimized to promote and accelerate protein folding. GroES binds to the apical surface of the GroEL ring, thereby capping the opening of the GroEL channel. The protein is Co-chaperonin GroES of Rippkaea orientalis (strain PCC 8801 / RF-1) (Cyanothece sp. (strain PCC 8801)).